The following is a 430-amino-acid chain: UPF0597 protein DSY1109 (430 aa).

It belongs to the UPF0597 family.

This is UPF0597 protein DSY1109 from Desulfitobacterium hafniense (strain Y51).